The chain runs to 283 residues: 2-dehydro-3-deoxyphosphooctonate aldolase (283 aa).

This sequence belongs to the KdsA family.

It is found in the cytoplasm. The enzyme catalyses D-arabinose 5-phosphate + phosphoenolpyruvate + H2O = 3-deoxy-alpha-D-manno-2-octulosonate-8-phosphate + phosphate. Its pathway is carbohydrate biosynthesis; 3-deoxy-D-manno-octulosonate biosynthesis; 3-deoxy-D-manno-octulosonate from D-ribulose 5-phosphate: step 2/3. The protein operates within bacterial outer membrane biogenesis; lipopolysaccharide biosynthesis. The chain is 2-dehydro-3-deoxyphosphooctonate aldolase from Shewanella frigidimarina (strain NCIMB 400).